A 223-amino-acid chain; its full sequence is Type II restriction enzyme BglII (223 aa).

Residues Asp-84 and Val-94 each coordinate Mg(2+).

Homodimer. Mg(2+) is required as a cofactor.

The catalysed reaction is Endonucleolytic cleavage of DNA to give specific double-stranded fragments with terminal 5'-phosphates.. A P subtype restriction enzyme that recognizes the double-stranded sequence 5'-AGATCT-3' and cleaves after A-1. The polypeptide is Type II restriction enzyme BglII (bglIIR) (Bacillus subtilis).